The chain runs to 317 residues: Aspartate carbamoyltransferase catalytic subunit (317 aa).

Carbamoyl phosphate is bound by residues arginine 64 and threonine 65. Residue lysine 92 participates in L-aspartate binding. Carbamoyl phosphate-binding residues include arginine 114, histidine 142, and glutamine 145. L-aspartate contacts are provided by arginine 176 and arginine 230. Positions 271 and 272 each coordinate carbamoyl phosphate.

Belongs to the aspartate/ornithine carbamoyltransferase superfamily. ATCase family. Heterododecamer (2C3:3R2) of six catalytic PyrB chains organized as two trimers (C3), and six regulatory PyrI chains organized as three dimers (R2).

It catalyses the reaction carbamoyl phosphate + L-aspartate = N-carbamoyl-L-aspartate + phosphate + H(+). It functions in the pathway pyrimidine metabolism; UMP biosynthesis via de novo pathway; (S)-dihydroorotate from bicarbonate: step 2/3. Functionally, catalyzes the condensation of carbamoyl phosphate and aspartate to form carbamoyl aspartate and inorganic phosphate, the committed step in the de novo pyrimidine nucleotide biosynthesis pathway. This chain is Aspartate carbamoyltransferase catalytic subunit, found in Nitratidesulfovibrio vulgaris (strain DP4) (Desulfovibrio vulgaris).